The primary structure comprises 76 residues: Protein MATERNALLY EXPRESSED GENE 4 (76 aa).

A signal peptide spans 1–27 (MEYRKRVDALVFFSLLLLGYFAAHAHG). Cys53 and Cys75 are disulfide-bonded.

It belongs to the MEG family. As to expression, expressed exclusively in endosperm.

The chain is Protein MATERNALLY EXPRESSED GENE 4 (MEG4) from Zea mays (Maize).